A 429-amino-acid polypeptide reads, in one-letter code: Glutamate-1-semialdehyde 2,1-aminomutase (429 aa).

Lys-265 is modified (N6-(pyridoxal phosphate)lysine).

It belongs to the class-III pyridoxal-phosphate-dependent aminotransferase family. HemL subfamily. As to quaternary structure, homodimer. It depends on pyridoxal 5'-phosphate as a cofactor.

Its subcellular location is the cytoplasm. It carries out the reaction (S)-4-amino-5-oxopentanoate = 5-aminolevulinate. Its pathway is porphyrin-containing compound metabolism; protoporphyrin-IX biosynthesis; 5-aminolevulinate from L-glutamyl-tRNA(Glu): step 2/2. In Acidobacterium capsulatum (strain ATCC 51196 / DSM 11244 / BCRC 80197 / JCM 7670 / NBRC 15755 / NCIMB 13165 / 161), this protein is Glutamate-1-semialdehyde 2,1-aminomutase.